The following is a 619-amino-acid chain: DNA mismatch repair protein MutL (619 aa).

It belongs to the DNA mismatch repair MutL/HexB family.

Functionally, this protein is involved in the repair of mismatches in DNA. It is required for dam-dependent methyl-directed DNA mismatch repair. May act as a 'molecular matchmaker', a protein that promotes the formation of a stable complex between two or more DNA-binding proteins in an ATP-dependent manner without itself being part of a final effector complex. The chain is DNA mismatch repair protein MutL from Myxococcus xanthus (strain DK1622).